The sequence spans 804 residues: Phenylalanine--tRNA ligase beta subunit (804 aa).

In terms of domain architecture, tRNA-binding spans 38–148 (RAAFRAFTIA…ENAPVGTSFA (111 aa)). Positions 401–476 (HTARVIDFPV…RIHGINRIDP (76 aa)) constitute a B5 domain. Mg(2+)-binding residues include aspartate 454, aspartate 460, glutamate 463, and glutamate 464. One can recognise an FDX-ACB domain in the interval 710–803 (SLFQSLKRDY…VAKQTGGVLR (94 aa)).

It belongs to the phenylalanyl-tRNA synthetase beta subunit family. Type 1 subfamily. As to quaternary structure, tetramer of two alpha and two beta subunits. Mg(2+) serves as cofactor.

Its subcellular location is the cytoplasm. The enzyme catalyses tRNA(Phe) + L-phenylalanine + ATP = L-phenylalanyl-tRNA(Phe) + AMP + diphosphate + H(+). The chain is Phenylalanine--tRNA ligase beta subunit from Brucella abortus (strain 2308).